A 274-amino-acid polypeptide reads, in one-letter code: 2,3,4,5-tetrahydropyridine-2,6-dicarboxylate N-succinyltransferase (274 aa).

Residues R106 and D143 each coordinate substrate.

It belongs to the transferase hexapeptide repeat family. As to quaternary structure, homotrimer.

It localises to the cytoplasm. It catalyses the reaction (S)-2,3,4,5-tetrahydrodipicolinate + succinyl-CoA + H2O = (S)-2-succinylamino-6-oxoheptanedioate + CoA. It functions in the pathway amino-acid biosynthesis; L-lysine biosynthesis via DAP pathway; LL-2,6-diaminopimelate from (S)-tetrahydrodipicolinate (succinylase route): step 1/3. The polypeptide is 2,3,4,5-tetrahydropyridine-2,6-dicarboxylate N-succinyltransferase (Rickettsia typhi (strain ATCC VR-144 / Wilmington)).